A 938-amino-acid polypeptide reads, in one-letter code: Isoleucine--tRNA ligase (938 aa).

A 'HIGH' region motif is present at residues 58–68; sequence PYANGSIHIGH. L-isoleucyl-5'-AMP is bound at residue Glu-561. Residues 602-606 carry the 'KMSKS' region motif; that stretch reads KMSKS. Position 605 (Lys-605) interacts with ATP. Residues Cys-901, Cys-904, Cys-921, and Cys-924 each contribute to the Zn(2+) site.

Belongs to the class-I aminoacyl-tRNA synthetase family. IleS type 1 subfamily. In terms of assembly, monomer. The cofactor is Zn(2+).

Its subcellular location is the cytoplasm. The catalysed reaction is tRNA(Ile) + L-isoleucine + ATP = L-isoleucyl-tRNA(Ile) + AMP + diphosphate. Catalyzes the attachment of isoleucine to tRNA(Ile). As IleRS can inadvertently accommodate and process structurally similar amino acids such as valine, to avoid such errors it has two additional distinct tRNA(Ile)-dependent editing activities. One activity is designated as 'pretransfer' editing and involves the hydrolysis of activated Val-AMP. The other activity is designated 'posttransfer' editing and involves deacylation of mischarged Val-tRNA(Ile). In Serratia proteamaculans (strain 568), this protein is Isoleucine--tRNA ligase.